Consider the following 492-residue polypeptide: NADPH:adrenodoxin oxidoreductase, mitochondrial (492 aa).

Residues Met1–Phe32 constitute a mitochondrion transit peptide. Residues Ala49, Glu70, Leu78, and Val114 each coordinate FAD. NADP(+) contacts are provided by residues Gln185 to Val188, Arg229 to Arg230, and Glu241. A phosphoserine mark is found at Ser311 and Ser318. FAD contacts are provided by residues Trp399 and Gly406–Ile408. Residue Gly406 participates in NADP(+) binding.

It belongs to the ferredoxin--NADP reductase type 1 family. As to quaternary structure, monomer. Interacts directly with FDX1. It depends on FAD as a cofactor. In terms of tissue distribution, detected in adrenal cortex and corpus luteum (at protein level).

It localises to the mitochondrion inner membrane. The enzyme catalyses 2 reduced [adrenodoxin] + NADP(+) + H(+) = 2 oxidized [adrenodoxin] + NADPH. The catalysed reaction is 2 reduced [2Fe-2S]-[ferredoxin] + NADP(+) + H(+) = 2 oxidized [2Fe-2S]-[ferredoxin] + NADPH. Its pathway is steroid metabolism; cholesterol metabolism. Functionally, serves as the first electron transfer protein in all the mitochondrial P450 systems including cholesterol side chain cleavage in all steroidogenic tissues, steroid 11-beta hydroxylation in the adrenal cortex, 25-OH-vitamin D3-24 hydroxylation in the kidney, and sterol C-27 hydroxylation in the liver. Also acts as a ferredoxin--NADP(+) reductase essential for coenzyme Q biosynthesis: together with FDX2, transfers the electrons required for the hydroxylation reaction performed by COQ6. This is NADPH:adrenodoxin oxidoreductase, mitochondrial (FDXR) from Bos taurus (Bovine).